The chain runs to 376 residues: uncharacterized protein (376 aa).

At 1–280 (MPIPIIAHIA…RTPGFRRVVS (280 aa)) the chain is on the lumenal side. I66, D115, R178, K233, V270, and T272 together coordinate NADP(+). The active-site Lowers pKa of active site Tyr is the K233. Residues 281-301 (FGKVWGLFLYLLLWPFWWLLL) form a helical membrane-spanning segment. Over 302–376 (KGTIHGAQSF…KKKKIKKSKK (75 aa)) the chain is Cytoplasmic.

Belongs to the short-chain dehydrogenases/reductases (SDR) family.

The protein resides in the cytoplasm. Its subcellular location is the endoplasmic reticulum membrane. In terms of biological role, may be involved in lipid metabolism. This is an uncharacterized protein from Schizosaccharomyces pombe (strain 972 / ATCC 24843) (Fission yeast).